The sequence spans 638 residues: Threonine--tRNA ligase (638 aa).

Residues 1-61 (MPVVTLPDGS…EADAEVALVT (61 aa)) form the TGS domain. The segment at 242–533 (DHRKLGKALD…LTEHYAGQYP (292 aa)) is catalytic. Residues Cys-333, His-384, and His-510 each coordinate Zn(2+).

This sequence belongs to the class-II aminoacyl-tRNA synthetase family. Homodimer. Zn(2+) is required as a cofactor.

It is found in the cytoplasm. The catalysed reaction is tRNA(Thr) + L-threonine + ATP = L-threonyl-tRNA(Thr) + AMP + diphosphate + H(+). In terms of biological role, catalyzes the attachment of threonine to tRNA(Thr) in a two-step reaction: L-threonine is first activated by ATP to form Thr-AMP and then transferred to the acceptor end of tRNA(Thr). Also edits incorrectly charged L-seryl-tRNA(Thr). In Methylococcus capsulatus (strain ATCC 33009 / NCIMB 11132 / Bath), this protein is Threonine--tRNA ligase.